The following is an 838-amino-acid chain: MGSDKRVSRSERSGRYGSAFDRDDRDDRDTRSRRRDSEYKRYRDERSSERYDDYRDYDSPERDRMRDRERRNSDRSEDGYHSDGDYMDHDYRQDYYMDEKESKTIMLRGLPININENDIRELVESFEGPQPADVRLMKRKTGLSRGFAFVEFYHLQDATRWMEANQKKLVIQGKTIAMHYSNPRPKFEDWLCNKCGLYNFRRRLKCFRCGAAKAESDLEAPSGSSDAPQSTDYYSDSGYVSSAIILRNIGPHTVVDSILSALAPYVSLVVSNIRLIKDKQTQQNRGFAFVQLPSTLEASQLLQILQTLHPPLKIDGKTVGVDFAKSARKDLVLPDGHRVSAFSVASTAIAAAQWSSTQQAQQSGEGGEYAYLQPGQEGYANYGQCSQDYQPFYQAQTGAAEQSTAPQAEGSAPVPATTSAVVCQSPQMYQQPGSPTQSGTSTAANTTPASTTSTTEEAAPPNAVIPGVKYSVPDTSTYQYDESSGYYYDPQTGLYYDPNSQYYYNSLTQQYLYWDGEKQTYLPAADGAGQSGAQPNGANAGSSKEGKEKKEKPKSKTAQQIAKDMERWAKSLNKQKENFKNSFQPLSARDEERKESAAADAGFALFEKKQGALLERQFMPDMMMMVNTEEEEKPPNKALVAAYSGDSDNEEESERLLGAVDEEKLLDWKKLACLLCRRQFPNKDALTRHQQLSDLHKQNLEVYRRSKMSEQELEALELKEREAKYRDRAAERREKYGIPEPPEPKRKRFDPTVVNYEQPTKDGIDNSNIGNKMLQAMGWKEGSGLGRKSQGITAPIQAQVRMRGAGLGAKGSSYGVNTSDSYKDAVRKAMFARFSEME.

The tract at residues 1–86 is disordered; that stretch reads MGSDKRVSRS…EDGYHSDGDY (86 aa). Residues 103–183 enclose the RRM 1 domain; the sequence is KTIMLRGLPI…KTIAMHYSNP (81 aa). The RanBP2-type zinc-finger motif lies at 186 to 215; that stretch reads KFEDWLCNKCGLYNFRRRLKCFRCGAAKAE. An RRM 2 domain is found at 242 to 326; that stretch reads SAIILRNIGP…KTVGVDFAKS (85 aa). 2 stretches are compositionally biased toward polar residues: residues 396–406 and 416–439; these read QTGAAEQSTAP and ATTS…TQSG. Disordered regions lie at residues 396-473 and 524-561; these read QTGA…YSVP and AADG…AQQI. Positions 440–462 are enriched in low complexity; the sequence is TSTAANTTPASTTSTTEEAAPPN. A compositionally biased stretch (polar residues) spans 531–540; sequence SGAQPNGANA. The C2H2-type zinc finger occupies 671 to 696; it reads LACLLCRRQFPNKDALTRHQQLSDLH. Positions 766-812 constitute a G-patch domain; sequence NSNIGNKMLQAMGWKEGSGLGRKSQGITAPIQAQVRMRGAGLGAKGS.

It belongs to the RBM5/RBM10 family. As to quaternary structure, component of the spliceosome A complex (also known as the prespliceosome). Appears to dissociate from the spliceosome upon formation of the spliceosome B complex (also known as the precatalytic spliceosome), in which the heterotrimeric U4/U6.U5 snRNPs are bound.

It is found in the nucleus. Its function is as follows. Component of the spliceosome A complex. Regulates alternative splicing of a number of mRNAs. May modulate splice site pairing after recruitment of the U1 and U2 snRNPs to the 5' and 3' splice sites of the intron. The protein is RNA-binding protein 5 (rbm5) of Xenopus tropicalis (Western clawed frog).